The chain runs to 101 residues: Small ribosomal subunit protein bS18c (101 aa).

Residues 1–19 (MNKSKRPFTKSKRSFRRRL) are compositionally biased toward basic residues. Positions 1 to 20 (MNKSKRPFTKSKRSFRRRLP) are disordered.

The protein belongs to the bacterial ribosomal protein bS18 family. In terms of assembly, part of the 30S ribosomal subunit.

It is found in the plastid. Its subcellular location is the chloroplast. The polypeptide is Small ribosomal subunit protein bS18c (Arabis hirsuta (Hairy rock-cress)).